Here is a 754-residue protein sequence, read N- to C-terminus: Condensin complex subunit 2 (754 aa).

Positions 104–149 are disordered; it reads LAQRKTNGASNGDDSNGGNGEGLGGDSDEANIEIDPLTGMPISNDP. Over residues 118 to 128 the composition is skewed to gly residues; sequence SNGGNGEGLGG. Phosphoserine is present on S245. The tract at residues 359 to 379 is disordered; sequence CYPDENHDNTSHDEQDDDNVN. The span at 362-371 shows a compositional bias: basic and acidic residues; the sequence is DENHDNTSHD. Position 548 is a phosphoserine (S548). Positions 665–688 are disordered; sequence HDSRKNREQSSNDSETHTEDESTK.

This sequence belongs to the CND2 (condensin subunit 2) family. Component of the condensin complex, which contains the SMC2 and SMC4 heterodimer, and three non SMC subunits that probably regulate the complex: BRN1, YCS4 and YCG1/YCS5.

It localises to the nucleus. It is found in the cytoplasm. The protein resides in the chromosome. Its function is as follows. Regulatory subunit of the condensin complex, a complex required for conversion of interphase chromatin into mitotic-like condense chromosomes. The condensin complex probably introduces positive supercoils into relaxed DNA in the presence of type I topoisomerases and converts nicked DNA into positive knotted forms in the presence of type II topoisomerases. The condensin complex probably also plays a role during interphase. This chain is Condensin complex subunit 2 (BRN1), found in Saccharomyces cerevisiae (strain ATCC 204508 / S288c) (Baker's yeast).